The sequence spans 703 residues: Antigen peptide transporter 2 (703 aa).

At 1–6 the chain is on the lumenal side; sequence MALSHP. The helical transmembrane segment at 7–27 threads the bilayer; that stretch reads RPWASLLLVDLALLGLLQSSL. Over 28 to 56 the chain is Cytoplasmic; sequence GTLLPPGLPGLWLEGTLRLGVLWGLLKVG. A helical membrane pass occupies residues 57 to 77; that stretch reads GLLRLVGTFLPLLCLTNPLFF. At 78 to 98 the chain is on the lumenal side; it reads SLRALVGSTMSTSVVRVASAS. The chain crosses the membrane as a helical span at residues 99 to 119; the sequence is WGWLLADYGAVALSLAVWAVL. The Cytoplasmic segment spans residues 120-148; sequence SPAGAQEKEPGQENNRALMIRLLRLSKPD. A helical transmembrane segment spans residues 149–169; sequence LPFLIVAFIFLAMAVWWEMFI. The 284-residue stretch at 152–435 folds into the ABC transmembrane type-1 domain; the sequence is LIVAFIFLAM…LVYMYGDMLS (284 aa). Residues 170–187 lie on the Lumenal side of the membrane; sequence PHYSGRVIDILGGDFDPD. A helical transmembrane segment spans residues 188–208; that stretch reads AFASAIFFMCLFSVGSSLSAG. Topologically, residues 209 to 266 are cytoplasmic; sequence CRGGSFLFAESRINLRIREQLFSSLLRQDLAFFQETKTGELNSRLSSDTSLMSQWLSL. The chain crosses the membrane as a helical span at residues 267-287; the sequence is NANILLRSLVKVVGLYYFMLQ. Topologically, residues 288-293 are lumenal; sequence VSPRLT. A helical transmembrane segment spans residues 294–314; sequence FLSLLDLPLTIAAEKVYNPRH. Residues 301–389 form a part of the peptide-binding site region; sequence PLTIAAEKVY…QRVMALGMQV (89 aa). Residues 315–374 lie on the Cytoplasmic side of the membrane; that stretch reads QAVLKEIQDAVAKAGQVVREAVGGLQTVRSFGAEEQEVRRYKEALERCRQLWWRRDLEKS. Residues 375-395 traverse the membrane as a helical segment; it reads LYLVIQRVMALGMQVLILNVG. Residues 396–408 lie on the Lumenal side of the membrane; that stretch reads VQQILAGEVTRGG. The chain crosses the membrane as a helical span at residues 409–429; the sequence is LLSFLLYQEEVGHHVQNLVYM. The segment at 414 to 433 is part of the peptide-binding site; the sequence is LYQEEVGHHVQNLVYMYGDM. Residues 430 to 703 are Cytoplasmic-facing; that stretch reads YGDMLSNVGA…AHLVQQRLEA (274 aa). One can recognise an ABC transporter domain in the interval 468–702; the sequence is VEFQDVSFSY…YAHLVQQRLE (235 aa). ATP is bound at residue 503-510; that stretch reads GPNGSGKS.

This sequence belongs to the ABC transporter superfamily. ABCB family. MHC peptide exporter (TC 3.A.1.209) subfamily. As to quaternary structure, heterodimer of TAP1 and TAP2 (TAP1-TAP2). A component of the peptide loading complex (PLC), interacts via TAPBP with MHCI heterodimer; this interaction mediates peptide-MHCI assembly. The cofactor is Mg(2+).

It is found in the endoplasmic reticulum membrane. It carries out the reaction a peptide antigen(in) + ATP + H2O = a peptide antigen(out) + ADP + phosphate + H(+). Its function is as follows. ABC transporter associated with antigen processing. In complex with TAP1 mediates unidirectional translocation of peptide antigens from cytosol to endoplasmic reticulum (ER) for loading onto MHC class I (MHCI) molecules. Uses the chemical energy of ATP to export peptides against the concentration gradient. During the transport cycle alternates between 'inward-facing' state with peptide binding site facing the cytosol to 'outward-facing' state with peptide binding site facing the ER lumen. Peptide antigen binding to ATP-loaded TAP1-TAP2 induces a switch to hydrolysis-competent 'outward-facing' conformation ready for peptide loading onto nascent MHCI molecules. Subsequently ATP hydrolysis resets the transporter to the 'inward facing' state for a new cycle. As a component of the peptide loading complex (PLC), acts as a molecular scaffold essential for peptide-MHCI assembly and antigen presentation. The protein is Antigen peptide transporter 2 (Tap2) of Rattus norvegicus (Rat).